Reading from the N-terminus, the 815-residue chain is G-type lectin S-receptor-like serine/threonine-protein kinase SD1-1 (815 aa).

Positions 1–22 (MREIHSLFSLSLFLISSSLSVA) are cleaved as a signal peptide. Topologically, residues 23–438 (LDYNVITPKE…FAKIEFKGRE (416 aa)) are extracellular. The 128-residue stretch at 25–152 (YNVITPKEFL…EEAVLWQSFD (128 aa)) folds into the Bulb-type lectin domain. N93, N249, and N265 each carry an N-linked (GlcNAc...) asparagine glycan. The 39-residue stretch at 288–326 (PEDECDYYSICGAYAVCGINSKNTPSCSCLQGFKPKSGR) folds into the EGF-like domain. 2 disulfide bridges follow: C292/C304 and C298/C314. N-linked (GlcNAc...) asparagine glycosylation is found at N329 and N385. Residues 345-428 (CEKKDAFVKF…FGQDVYIRMG (84 aa)) form the PAN domain. 2 disulfides stabilise this stretch: C378–C403 and C382–C388. Residues 439-459 (VVGMVVGSVVAIAVVLVVVFA) form a helical membrane-spanning segment. Topologically, residues 460–815 (CFRKKIMKRY…EVSITMLQGR (356 aa)) are cytoplasmic. Positions 500–783 (FSYVNFLGRG…SDSSLPHPTQ (284 aa)) constitute a Protein kinase domain. Residues 506–514 (LGRGGFGPV) and K528 contribute to the ATP site. A Phosphoserine modification is found at S534. The tract at residues 589 to 606 (RRSTELDWKKRMNIINGV) is caM-binding. D625 functions as the Proton acceptor in the catalytic mechanism. At S642 the chain carries Phosphoserine. T659 is subject to Phosphothreonine. Residues S797 and S803 each carry the phosphoserine modification. At T810 the chain carries Phosphothreonine.

The protein belongs to the protein kinase superfamily. Ser/Thr protein kinase family. As to quaternary structure, interacts with PUB9, PUB13 and PUB14.

It localises to the cell membrane. It carries out the reaction L-seryl-[protein] + ATP = O-phospho-L-seryl-[protein] + ADP + H(+). The enzyme catalyses L-threonyl-[protein] + ATP = O-phospho-L-threonyl-[protein] + ADP + H(+). This is G-type lectin S-receptor-like serine/threonine-protein kinase SD1-1 (SD11) from Arabidopsis thaliana (Mouse-ear cress).